We begin with the raw amino-acid sequence, 4486 residues long: Dynein axonemal heavy chain 9 (4486 aa).

Residues 1-1831 (MRLAEERAAL…FANICDAQFL (1831 aa)) form a stem region. Coiled-coil stretches lie at residues 381 to 410 (DLLRSEVEESQRKLQVVSDTLSFFKQEFQD), 504 to 529 (QSTDFENDVSEFNQKVEDLDRRLGTI), 639 to 662 (AEGKRMQQKYEDMLSLLEKYETRL), 752 to 823 (TLLE…TWVT), and 1326 to 1355 (NINVEAMELECKQFARHIRNLDKEVRAWDA). 4 AAA regions span residues 1832 to 2053 (YSYE…VLVV), 2113 to 2334 (ALVR…TRFK), 2440 to 2688 (EFDP…IFQG), and 2787 to 3036 (NHNE…EQRY). Residues 1870-1877 (GPAGTGKT), 2151-2158 (GGAGTGKS), 2478-2485 (GTAGTGKS), and 2825-2832 (GVGGSGKQ) contribute to the ATP site. 3 coiled-coil regions span residues 3051–3154 (YQSL…AKAE), 3285–3341 (KRQA…AEVT), and 3640–3675 (LVENLEITKQTAAEVEKKVQEAKVTEVKINEAREHY). A stalk region spans residues 3051 to 3341 (YQSLLHRHRK…LKCQQEAEVT (291 aa)). 2 AAA regions span residues 3429–3656 (LMDD…EVEK) and 3866–4092 (LRDF…VLYN).

This sequence belongs to the dynein heavy chain family. Consists of at least two heavy chains and a number of intermediate and light chains. Interacts with ODAD1. As to expression, expressed in upper and lower respiratory airway epithelia (at protein level). Not detected in spermatozoa (at protein level).

It localises to the cytoplasm. The protein resides in the cytoskeleton. The protein localises to the cilium axoneme. Force generating protein required for cilia beating in respiratory epithelia. Produces force towards the minus ends of microtubules. Dynein has ATPase activity; the force-producing power stroke is thought to occur on release of ADP. This chain is Dynein axonemal heavy chain 9, found in Homo sapiens (Human).